Consider the following 197-residue polypeptide: Orotate phosphoribosyltransferase (197 aa).

Residues Arg87, Lys91, His93, and 112-120 (DDVATTGGS) each bind 5-phospho-alpha-D-ribose 1-diphosphate. 2 residues coordinate orotate: Thr116 and Arg144.

Belongs to the purine/pyrimidine phosphoribosyltransferase family. PyrE subfamily. As to quaternary structure, homodimer. Mg(2+) is required as a cofactor.

It carries out the reaction orotidine 5'-phosphate + diphosphate = orotate + 5-phospho-alpha-D-ribose 1-diphosphate. It functions in the pathway pyrimidine metabolism; UMP biosynthesis via de novo pathway; UMP from orotate: step 1/2. Its function is as follows. Catalyzes the transfer of a ribosyl phosphate group from 5-phosphoribose 1-diphosphate to orotate, leading to the formation of orotidine monophosphate (OMP). The sequence is that of Orotate phosphoribosyltransferase from Sulfolobus acidocaldarius (strain ATCC 33909 / DSM 639 / JCM 8929 / NBRC 15157 / NCIMB 11770).